The sequence spans 358 residues: Probable BOI-related E3 ubiquitin-protein ligase 2 (358 aa).

A coiled-coil region spans residues 171–234 (KYEIEEKRKR…NQIWRDLAQT (64 aa)). Positions 214–250 (LEERVKSLSIENQIWRDLAQTNEATANHLRTNLEHVL) are WRD domain. The RING-type zinc finger occupies 310–345 (CRNCGEEESCVLLLPCRHLCLCGVCGSSVHTCPICT).

Interacts with the DELLA proteins GAI, RGA, RGL1, RGL2 and RGL3.

The catalysed reaction is S-ubiquitinyl-[E2 ubiquitin-conjugating enzyme]-L-cysteine + [acceptor protein]-L-lysine = [E2 ubiquitin-conjugating enzyme]-L-cysteine + N(6)-ubiquitinyl-[acceptor protein]-L-lysine.. It participates in protein degradation; proteasomal ubiquitin-dependent pathway. In terms of biological role, probable E3 ubiquitin-protein ligase. Has no effect on the stability of the DELLA proteins. This Arabidopsis thaliana (Mouse-ear cress) protein is Probable BOI-related E3 ubiquitin-protein ligase 2 (BRG2).